Here is a 297-residue protein sequence, read N- to C-terminus: N-acetylmuramic acid 6-phosphate etherase (297 aa).

Positions 56 to 219 (AIEAFNKGGR…STISMIGIGK (164 aa)) constitute an SIS domain. Residue glutamate 84 is the Proton donor of the active site. Glutamate 115 is a catalytic residue.

It belongs to the GCKR-like family. MurNAc-6-P etherase subfamily. In terms of assembly, homodimer.

The enzyme catalyses N-acetyl-D-muramate 6-phosphate + H2O = N-acetyl-D-glucosamine 6-phosphate + (R)-lactate. It participates in amino-sugar metabolism; N-acetylmuramate degradation. In terms of biological role, specifically catalyzes the cleavage of the D-lactyl ether substituent of MurNAc 6-phosphate, producing GlcNAc 6-phosphate and D-lactate. The chain is N-acetylmuramic acid 6-phosphate etherase from Lactococcus lactis subsp. lactis (strain IL1403) (Streptococcus lactis).